We begin with the raw amino-acid sequence, 251 residues long: Malonyl-[acyl-carrier protein] O-methyltransferase (251 aa).

The protein belongs to the methyltransferase superfamily.

It catalyses the reaction malonyl-[ACP] + S-adenosyl-L-methionine = malonyl-[ACP] methyl ester + S-adenosyl-L-homocysteine. It functions in the pathway cofactor biosynthesis; biotin biosynthesis. Functionally, converts the free carboxyl group of a malonyl-thioester to its methyl ester by transfer of a methyl group from S-adenosyl-L-methionine (SAM). It allows to synthesize pimeloyl-ACP via the fatty acid synthetic pathway. The sequence is that of Malonyl-[acyl-carrier protein] O-methyltransferase from Erwinia billingiae (strain Eb661).